The chain runs to 69 residues: Putative membrane protein insertion efficiency factor (69 aa).

This sequence belongs to the UPF0161 family.

It is found in the cell membrane. Functionally, could be involved in insertion of integral membrane proteins into the membrane. This Clostridium perfringens (strain SM101 / Type A) protein is Putative membrane protein insertion efficiency factor.